We begin with the raw amino-acid sequence, 323 residues long: Transcription factor MYB56 (323 aa).

The span at 1 to 14 (MNPNLLEKDLRGKE) shows a compositional bias: basic and acidic residues. The disordered stretch occupies residues 1 to 84 (MNPNLLEKDL…EKSLRMRGKS (84 aa)). Residues 27 to 60 (NFRSLPNSHTAACKTSLNNPSISRNHPHNKSASV) show a composition bias toward polar residues. A compositionally biased stretch (basic and acidic residues) spans 66-78 (EHGNERGENEKSL). 2 consecutive HTH myb-type domains span residues 88 to 139 (TKVC…FNQL) and 140 to 194 (DPRI…ARRT). 2 consecutive DNA-binding regions (H-T-H motif) follow at residues 116–138 (WNLISNHLLGRSGKSCRLRWFNQ) and 167–190 (WALISRLFPGRTDNAVKNHWHVIM). The disordered stretch occupies residues 192–217 (RRTRESQRQRQQPPPTLSRDAEMTVS).

In terms of assembly, forms homodimer. Interacts with the dephosphorylated active form of BES1 in the nucleus of quiescent center (QC) cells. Interacts with BPM1, BPM2, BPM3, BPM4, BPM5 and BPM6 at the promoter of FLOWERING LOCUS T (FT). In terms of tissue distribution, mostly expressed in flowers (at protein level) and siliques, and, to a lower extent, in roots, stems and leaves. Expressed in embryos (e.g. heart and torpedo stages) and cotyledons, and, at low levels, in roots and inflorescence. Accumulates specifically in root apical meristem quiescent center (QC) and vascular initial cells.

Its subcellular location is the nucleus. The protein localises to the cytoplasm. It localises to the cytosol. In terms of biological role, acts as a cell-specific local repressor of quiescent center (QC) self-renewal by cell divisions in the primary root. Counteracts brassinosteroid (BR)-mediated cell division in the QC cells. Regulates maternally seed size, especially before the heart stage, promoting both endothelial cells expansion and cell number in the outer integument layer of the seed coat. Modulates the expression of genes involved in cell wall metabolism such as cell division and expansion. Negative regulator of flowering via the repression of FT transcription. This chain is Transcription factor MYB56, found in Arabidopsis thaliana (Mouse-ear cress).